Here is a 181-residue protein sequence, read N- to C-terminus: Transcriptional repressor NrdR (181 aa).

Residues 3–34 (CPFCRHPDSRVVDSREAEEGSAIRRRRSCLSC) fold into a zinc finger. The 91-residue stretch at 46-136 (LQVRKRSGAA…VYLAFESLTD (91 aa)) folds into the ATP-cone domain. The disordered stretch occupies residues 148 to 181 (AAGPPTTRDGPARPVPRGAVDVSPVIGTQQVHSR).

This sequence belongs to the NrdR family. The cofactor is Zn(2+).

Its function is as follows. Negatively regulates transcription of bacterial ribonucleotide reductase nrd genes and operons by binding to NrdR-boxes. The protein is Transcriptional repressor NrdR of Frankia casuarinae (strain DSM 45818 / CECT 9043 / HFP020203 / CcI3).